The following is a 147-amino-acid chain: Phospholipase A2-beta (147 aa).

The first 28 residues, 1–28 (MMFRTSLMRFAAAFFAIVFVVLVGVARS), serve as a signal peptide directing secretion. Cystine bridges form between cysteine 31-cysteine 58, cysteine 35-cysteine 64, cysteine 40-cysteine 117, cysteine 51-cysteine 71, cysteine 70-cysteine 95, and cysteine 77-cysteine 88. Ca(2+) contacts are provided by tyrosine 50, glycine 52, and histidine 55. Histidine 74 is a catalytic residue. Aspartate 75 provides a ligand contact to Ca(2+). A Prevents secretion from ER motif is present at residues 144 to 147 (KTEL).

Belongs to the phospholipase A2 family. Ca(2+) is required as a cofactor. In terms of tissue distribution, ubiquitous but expressed at a low level. Detected in vascular tissues and in the guard cells. Predominantly detected in pollen.

The protein resides in the secreted. The protein localises to the endoplasmic reticulum. It carries out the reaction a 1,2-diacyl-sn-glycero-3-phosphocholine + H2O = a 1-acyl-sn-glycero-3-phosphocholine + a fatty acid + H(+). With respect to regulation, inhibited by aristolochic acid. Its function is as follows. PA2 catalyzes the calcium-dependent hydrolysis of the 2-acyl groups in 3-sn-phosphoglycerides. Releases lysophospholipids (LPLs) and free fatty acids (FFAs) from membrane phospholipids in response to hormones and other external stimuli. Regulates the process of cell elongation and plays important roles in shoot gravitropism by mediating auxin-induced cell elongation. Involved in stomatal opening in response to light. Plays a role in pollen development and germination and tube growth. The protein is Phospholipase A2-beta (PLA2-BETA) of Arabidopsis thaliana (Mouse-ear cress).